Reading from the N-terminus, the 260-residue chain is Flap endonuclease Xni (260 aa).

Aspartate 112 provides a ligand contact to Mg(2+). Positions 168–258 (LQPSQLVDFW…FNLKDLRYTP (91 aa)) constitute a 5'-3' exonuclease domain. Residues leucine 179, valine 190, and isoleucine 193 each contribute to the K(+) site. Residues 192–197 (GIGEKT) form an interaction with DNA region.

The protein belongs to the Xni family. It depends on Mg(2+) as a cofactor. Requires K(+) as cofactor.

In terms of biological role, has flap endonuclease activity. During DNA replication, flap endonucleases cleave the 5'-overhanging flap structure that is generated by displacement synthesis when DNA polymerase encounters the 5'-end of a downstream Okazaki fragment. The chain is Flap endonuclease Xni from Tolumonas auensis (strain DSM 9187 / NBRC 110442 / TA 4).